We begin with the raw amino-acid sequence, 369 residues long: Protein HGH1 homolog (369 aa).

It belongs to the HGH1 family.

The polypeptide is Protein HGH1 homolog (Drosophila melanogaster (Fruit fly)).